The chain runs to 339 residues: MO25-like protein 3 (339 aa).

The protein belongs to the Mo25 family.

The chain is MO25-like protein 3 (mop-25.3) from Caenorhabditis elegans.